Here is a 158-residue protein sequence, read N- to C-terminus: NAD(P)H-quinone oxidoreductase subunit N (158 aa).

Belongs to the complex I NdhN subunit family. NDH-1 can be composed of about 15 different subunits; different subcomplexes with different compositions have been identified which probably have different functions.

The protein resides in the cellular thylakoid membrane. The enzyme catalyses a plastoquinone + NADH + (n+1) H(+)(in) = a plastoquinol + NAD(+) + n H(+)(out). It carries out the reaction a plastoquinone + NADPH + (n+1) H(+)(in) = a plastoquinol + NADP(+) + n H(+)(out). Its function is as follows. NDH-1 shuttles electrons from an unknown electron donor, via FMN and iron-sulfur (Fe-S) centers, to quinones in the respiratory and/or the photosynthetic chain. The immediate electron acceptor for the enzyme in this species is believed to be plastoquinone. Couples the redox reaction to proton translocation, and thus conserves the redox energy in a proton gradient. Cyanobacterial NDH-1 also plays a role in inorganic carbon-concentration. The chain is NAD(P)H-quinone oxidoreductase subunit N from Rippkaea orientalis (strain PCC 8801 / RF-1) (Cyanothece sp. (strain PCC 8801)).